A 315-amino-acid chain; its full sequence is Ribosomal protein L11 methyltransferase (315 aa).

S-adenosyl-L-methionine-binding residues include Thr164, Gly185, Asp207, and Asn249.

It belongs to the methyltransferase superfamily. PrmA family.

It is found in the cytoplasm. It catalyses the reaction L-lysyl-[protein] + 3 S-adenosyl-L-methionine = N(6),N(6),N(6)-trimethyl-L-lysyl-[protein] + 3 S-adenosyl-L-homocysteine + 3 H(+). In terms of biological role, methylates ribosomal protein L11. This is Ribosomal protein L11 methyltransferase from Lactobacillus gasseri (strain ATCC 33323 / DSM 20243 / BCRC 14619 / CIP 102991 / JCM 1131 / KCTC 3163 / NCIMB 11718 / NCTC 13722 / AM63).